The primary structure comprises 330 residues: Glycoprotein integral membrane protein 1 (330 aa).

The N-terminal stretch at 1–23 is a signal peptide; sequence MEGAPLGPLALRLLLFVALPASG. Residues 24–268 lie on the Extracellular side of the membrane; the sequence is WLTTGAPEPP…VFPVFFQFLN (245 aa). 4 N-linked (GlcNAc...) asparagine glycosylation sites follow: Asn46, Asn64, Asn166, and Asn191. Residues 269–289 form a helical membrane-spanning segment; sequence IMVVGITGAAVVITILKVLFP. The Cytoplasmic portion of the chain corresponds to 290–330; sequence VSEYKGILQLDKVDVIPVTAINLYPDGPEKTAENLEDKTCI.

The protein resides in the membrane. The sequence is that of Glycoprotein integral membrane protein 1 (GINM1) from Pongo abelii (Sumatran orangutan).